A 96-amino-acid polypeptide reads, in one-letter code: Protein Vpr (96 aa).

The tract at residues M1–L42 is homooligomerization. A phosphoserine; by host mark is found at S79, S94, and S96.

This sequence belongs to the HIV-1 VPR protein family. In terms of assembly, homooligomer, may form homodimer. Interacts with p6-gag region of the Pr55 Gag precursor protein through a (Leu-X-X)4 motif near the C-terminus of the P6gag protein. Interacts with host UNG. May interact with host RAD23A/HHR23A. Interacts with host VPRBP/DCAF1, leading to hijack the CUL4A-RBX1-DDB1-DCAF1/VPRBP complex, mediating ubiquitination of host proteins such as TERT and ZGPAT and arrest of the cell cycle in G2 phase. In terms of processing, phosphorylated on several residues by host. These phosphorylations regulate VPR activity for the nuclear import of the HIV-1 pre-integration complex.

The protein resides in the virion. The protein localises to the host nucleus. It is found in the host extracellular space. During virus replication, may deplete host UNG protein, and incude G2-M cell cycle arrest. Acts by targeting specific host proteins for degradation by the 26S proteasome, through association with the cellular CUL4A-DDB1 E3 ligase complex by direct interaction with host VPRPB/DCAF-1. Cell cycle arrest reportedly occurs within hours of infection and is not blocked by antiviral agents, suggesting that it is initiated by the VPR carried into the virion. Additionally, VPR induces apoptosis in a cell cycle dependent manner suggesting that these two effects are mechanistically linked. Detected in the serum and cerebrospinal fluid of AIDS patient, VPR may also induce cell death to bystander cells. Its function is as follows. During virus entry, plays a role in the transport of the viral pre-integration (PIC) complex to the host nucleus. This function is crucial for viral infection of non-dividing macrophages. May act directly at the nuclear pore complex, by binding nucleoporins phenylalanine-glycine (FG)-repeat regions. The protein is Protein Vpr of Human immunodeficiency virus type 1 group M subtype F1 (isolate VI850) (HIV-1).